Here is a 98-residue protein sequence, read N- to C-terminus: Small proline-rich protein 2B (98 aa).

A run of 5 repeats spans residues 21-29 (PKCPEPCPP), 30-38 (PKCPEPCPP), 39-47 (PVCCEPCPP), 48-56 (PKCPEPCPP), and 57-65 (PVCCEPCPP). Residues 21 to 65 (PKCPEPCPPPKCPEPCPPPVCCEPCPPPKCPEPCPPPVCCEPCPP) form a 5 X 9 AA approximate tandem repeats region.

Belongs to the cornifin (SPRR) family. Expressed in uterus.

The protein localises to the cytoplasm. In terms of biological role, cross-linked envelope protein of keratinocytes. It is a keratinocyte protein that first appears in the cell cytosol, but ultimately becomes cross-linked to membrane proteins by transglutaminase. All that results in the formation of an insoluble envelope beneath the plasma membrane. The chain is Small proline-rich protein 2B (Sprr2b) from Mus musculus (Mouse).